The chain runs to 301 residues: Ribosomal RNA large subunit methyltransferase F (301 aa).

It belongs to the methyltransferase superfamily. METTL16/RlmF family.

The protein resides in the cytoplasm. It catalyses the reaction adenosine(1618) in 23S rRNA + S-adenosyl-L-methionine = N(6)-methyladenosine(1618) in 23S rRNA + S-adenosyl-L-homocysteine + H(+). In terms of biological role, specifically methylates the adenine in position 1618 of 23S rRNA. The protein is Ribosomal RNA large subunit methyltransferase F of Colwellia psychrerythraea (strain 34H / ATCC BAA-681) (Vibrio psychroerythus).